Here is a 185-residue protein sequence, read N- to C-terminus: Ribosome maturation factor RimM (185 aa).

A PRC barrel domain is found at 96–171; it reads EDEFYHSDLL…VITIDPPEDV (76 aa). The segment at 165–185 is disordered; that stretch reads IDPPEDVGSKAEEEGGGAPDD.

It belongs to the RimM family. Binds ribosomal protein uS19.

It localises to the cytoplasm. An accessory protein needed during the final step in the assembly of 30S ribosomal subunit, possibly for assembly of the head region. Essential for efficient processing of 16S rRNA. May be needed both before and after RbfA during the maturation of 16S rRNA. It has affinity for free ribosomal 30S subunits but not for 70S ribosomes. The sequence is that of Ribosome maturation factor RimM from Maricaulis maris (strain MCS10) (Caulobacter maris).